Here is a 58-residue protein sequence, read N- to C-terminus: ATP synthase F(0) complex subunit k, mitochondrial (58 aa).

Residues Lys16 and Lys17 each carry the N6-acetyllysine; partial modification. The helical transmembrane segment at Thr23–Phe45 threads the bilayer.

As to quaternary structure, component of the ATP synthase complex composed at least of ATP5F1A/subunit alpha, ATP5F1B/subunit beta, ATP5MC1/subunit c (homooctomer), MT-ATP6/subunit a, MT-ATP8/subunit 8, ATP5ME/subunit e, ATP5MF/subunit f, ATP5MG/subunit g, ATP5MK/subunit k, ATP5MJ/subunit j, ATP5F1C/subunit gamma, ATP5F1D/subunit delta, ATP5F1E/subunit epsilon, ATP5PF/subunit F6, ATP5PB/subunit b, ATP5PD/subunit d, ATP5PO/subunit OSCP. ATP synthase complex consists of a soluble F(1) head domain (subunits alpha(3) and beta(3)) - the catalytic core - and a membrane F(0) domain - the membrane proton channel (subunits c, a, 8, e, f, g, k and j). These two domains are linked by a central stalk (subunits gamma, delta, and epsilon) rotating inside the F1 region and a stationary peripheral stalk (subunits F6, b, d, and OSCP). The ATP synthase complex/complex V exists as a monomeric and a dimeric supercomplex that helps shape mitochondrial cristae to optimize proton flow.

The protein resides in the mitochondrion membrane. In terms of biological role, subunit k, of the mitochondrial membrane ATP synthase complex (F(1)F(0) ATP synthase or Complex V) that produces ATP from ADP in the presence of a proton gradient across the membrane which is generated by electron transport complexes of the respiratory chain. ATP synthase complex consist of a soluble F(1) head domain - the catalytic core - and a membrane F(1) domain - the membrane proton channel. These two domains are linked by a central stalk rotating inside the F(1) region and a stationary peripheral stalk. During catalysis, ATP synthesis in the catalytic domain of F(1) is coupled via a rotary mechanism of the central stalk subunits to proton translocation. In vivo, can only synthesize ATP although its ATP hydrolase activity can be activated artificially in vitro. Part of the complex F(0) domain. Required for dimerization of the ATP synthase complex and as such regulates ATP synthesis in the mitochondria. This is ATP synthase F(0) complex subunit k, mitochondrial from Bos taurus (Bovine).